Here is a 188-residue protein sequence, read N- to C-terminus: Probable chorismate pyruvate-lyase (188 aa).

Substrate-binding residues include Arg-77, Leu-115, and Glu-174.

It belongs to the UbiC family.

Its subcellular location is the cytoplasm. It carries out the reaction chorismate = 4-hydroxybenzoate + pyruvate. It participates in cofactor biosynthesis; ubiquinone biosynthesis. Removes the pyruvyl group from chorismate, with concomitant aromatization of the ring, to provide 4-hydroxybenzoate (4HB) for the ubiquinone pathway. The chain is Probable chorismate pyruvate-lyase from Shewanella loihica (strain ATCC BAA-1088 / PV-4).